The chain runs to 361 residues: Glutaminyl-peptide cyclotransferase (361 aa).

Positions 1–28 (MAGGRHRRVVGTLHLLLLVAALPWASRG) are cleaved as a signal peptide. A glycan (N-linked (GlcNAc...) asparagine) is linked at asparagine 49. The cysteines at positions 139 and 164 are disulfide-linked. Residue aspartate 159 participates in Zn(2+) binding. Glutamate 201 acts as the Proton acceptor in catalysis. Residue glutamate 202 participates in Zn(2+) binding. The active-site Proton acceptor is aspartate 248. N-linked (GlcNAc...) asparagine glycosylation occurs at asparagine 296. Histidine 330 contacts Zn(2+).

Belongs to the glutaminyl-peptide cyclotransferase family.

The protein resides in the secreted. The catalysed reaction is N-terminal L-glutaminyl-[peptide] = N-terminal 5-oxo-L-prolyl-[peptide] + NH4(+). Responsible for the biosynthesis of pyroglutamyl peptides. Has a bias against acidic and tryptophan residues adjacent to the N-terminal glutaminyl residue and a lack of importance of chain length after the second residue. Also catalyzes N-terminal pyroglutamate formation. In vitro, catalyzes pyroglutamate formation of N-terminally truncated form of APP amyloid-beta peptides [Glu-3]-amyloid-beta. May be involved in the N-terminal pyroglutamate formation of several amyloid-related plaque-forming peptides. The sequence is that of Glutaminyl-peptide cyclotransferase (QPCT) from Homo sapiens (Human).